A 369-amino-acid chain; its full sequence is Chaperone protein DnaJ (369 aa).

The 67-residue stretch at 7-73 (DYYEILGVPR…QKRAMYDRFG (67 aa)) folds into the J domain. The CR-type zinc finger occupies 143–225 (GAEIPVEYER…CGGSGRVLRK (83 aa)). Residues Cys156, Cys159, Cys173, Cys176, Cys199, Cys202, Cys213, and Cys216 each coordinate Zn(2+). 4 CXXCXGXG motif repeats span residues 156-163 (CPRCGGTG), 173-180 (CPSCGGTG), 199-206 (CERCGGTG), and 213-220 (CHECGGSG).

Belongs to the DnaJ family. As to quaternary structure, homodimer. Zn(2+) serves as cofactor.

The protein resides in the cytoplasm. Functionally, participates actively in the response to hyperosmotic and heat shock by preventing the aggregation of stress-denatured proteins and by disaggregating proteins, also in an autonomous, DnaK-independent fashion. Unfolded proteins bind initially to DnaJ; upon interaction with the DnaJ-bound protein, DnaK hydrolyzes its bound ATP, resulting in the formation of a stable complex. GrpE releases ADP from DnaK; ATP binding to DnaK triggers the release of the substrate protein, thus completing the reaction cycle. Several rounds of ATP-dependent interactions between DnaJ, DnaK and GrpE are required for fully efficient folding. Also involved, together with DnaK and GrpE, in the DNA replication of plasmids through activation of initiation proteins. This is Chaperone protein DnaJ from Thermotoga petrophila (strain ATCC BAA-488 / DSM 13995 / JCM 10881 / RKU-1).